Here is a 142-residue protein sequence, read N- to C-terminus: ATP synthase epsilon chain (142 aa).

It belongs to the ATPase epsilon chain family. In terms of assembly, F-type ATPases have 2 components, CF(1) - the catalytic core - and CF(0) - the membrane proton channel. CF(1) has five subunits: alpha(3), beta(3), gamma(1), delta(1), epsilon(1). CF(0) has three main subunits: a, b and c.

The protein localises to the cell inner membrane. Functionally, produces ATP from ADP in the presence of a proton gradient across the membrane. This is ATP synthase epsilon chain from Shewanella sp. (strain ANA-3).